The sequence spans 411 residues: SH3 and cysteine-rich domain-containing protein 2 (411 aa).

Residues 1 to 29 (MTEMSEKENEPDDAATHSPPGTVSALQET) form a disordered region. Over residues 19–29 (PPGTVSALQET) the composition is skewed to polar residues. Phosphoserine is present on serine 48. A disordered region spans residues 64–95 (TEVLLTPPTPLPPPSPPPTASDRGLATPSPSP). Pro residues predominate over residues 70-82 (PPTPLPPPSPPPT). The Phorbol-ester/DAG-type zinc-finger motif lies at 110 to 161 (LHSFQEHVFKRASPCELCHQLIVGNSKQGLRCKMCKVSVHLWCSEEISHQQC). Disordered stretches follow at residues 174 to 203 (SSPL…KVDP) and 219 to 288 (RSSF…ATLR). The span at 219 to 232 (RSSFSSTSESPTRS) shows a compositional bias: low complexity. 2 consecutive SH3 domains span residues 292–351 (GPMY…RVRP) and 354–411 (NVWR…LTEI).

As to quaternary structure, interacts (via SH3 domains) with CACNA1S. Interacts (via SH3 domains) with CACNA1C. Has much lower affinity for CACNA1C than for CACNA1S.

It is found in the cytoplasm. It localises to the cytosol. Its subcellular location is the cell membrane. The protein localises to the sarcolemma. Its function is as follows. Plays a redundant role in promoting the expression of calcium channel CACNA1S at the cell membrane, and thereby contributes to increased channel activity. Slows down the inactivation rate of the calcium channel CACNA1C. This is SH3 and cysteine-rich domain-containing protein 2 (STAC2) from Homo sapiens (Human).